A 253-amino-acid chain; its full sequence is Glutamate racemase (253 aa).

Substrate contacts are provided by residues 7–8 (DS) and 39–40 (YG). Cys-70 functions as the Proton donor/acceptor in the catalytic mechanism. 71 to 72 (NT) contacts substrate. The Proton donor/acceptor role is filled by Cys-180. 181-182 (TH) is a substrate binding site.

Belongs to the aspartate/glutamate racemases family.

The catalysed reaction is L-glutamate = D-glutamate. Its pathway is cell wall biogenesis; peptidoglycan biosynthesis. Provides the (R)-glutamate required for cell wall biosynthesis. In Halothermothrix orenii (strain H 168 / OCM 544 / DSM 9562), this protein is Glutamate racemase.